A 684-amino-acid polypeptide reads, in one-letter code: Protein-glutamine gamma-glutamyltransferase 4 (684 aa).

Residues cysteine 268, histidine 327, and aspartate 350 contribute to the active site. Positions 390, 392, 442, and 447 each coordinate Ca(2+).

Belongs to the transglutaminase superfamily. Transglutaminase family. Homodimer. Requires Ca(2+) as cofactor. Prostate.

The catalysed reaction is L-glutaminyl-[protein] + L-lysyl-[protein] = [protein]-L-lysyl-N(6)-5-L-glutamyl-[protein] + NH4(+). Functionally, associated with the mammalian reproductive process. Catalyzes the cross-linking of proteins and the conjugation of polyamines to specific proteins in the seminal tract. The sequence is that of Protein-glutamine gamma-glutamyltransferase 4 (TGM4) from Homo sapiens (Human).